The following is a 264-amino-acid chain: Glutamate racemase (264 aa).

Residues 10 to 11 (DS) and 42 to 43 (YG) each bind substrate. Cys-73 acts as the Proton donor/acceptor in catalysis. A substrate-binding site is contributed by 74-75 (NT). Catalysis depends on Cys-183, which acts as the Proton donor/acceptor. Position 184–185 (184–185 (TH)) interacts with substrate.

Belongs to the aspartate/glutamate racemases family.

The catalysed reaction is L-glutamate = D-glutamate. It functions in the pathway cell wall biogenesis; peptidoglycan biosynthesis. Provides the (R)-glutamate required for cell wall biosynthesis. This Streptococcus pyogenes serotype M49 (strain NZ131) protein is Glutamate racemase.